We begin with the raw amino-acid sequence, 321 residues long: AA9 family lytic polysaccharide monooxygenase A (321 aa).

The N-terminal stretch at methionine 1–glycine 21 is a signal peptide. Histidine 20 lines the Cu(2+) pocket. Cysteine 71 and cysteine 197 are disulfide-bonded. N-linked (GlcNAc...) asparagine glycosylation occurs at asparagine 72. Histidine 105 is a binding site for Cu(2+). A glycan (N-linked (GlcNAc...) asparagine) is linked at asparagine 157. 2 residues coordinate O2: histidine 183 and glutamine 192. Position 194 (tyrosine 194) interacts with Cu(2+). Residues serine 278–alanine 306 are disordered. Serine 293 is lipidated: GPI-anchor amidated serine. Positions serine 294–alanine 321 are cleaved as a propeptide — removed in mature form.

It belongs to the polysaccharide monooxygenase AA9 family. It depends on Cu(2+) as a cofactor.

It localises to the cell membrane. It carries out the reaction [(1-&gt;4)-beta-D-glucosyl]n+m + reduced acceptor + O2 = 4-dehydro-beta-D-glucosyl-[(1-&gt;4)-beta-D-glucosyl]n-1 + [(1-&gt;4)-beta-D-glucosyl]m + acceptor + H2O.. Its function is as follows. Lytic polysaccharide monooxygenase (LPMO) that depolymerizes crystalline and amorphous polysaccharides via the oxidation of scissile alpha- or beta-(1-4)-glycosidic bonds, yielding C1 or C4 oxidation products. Catalysis by LPMOs requires the reduction of the active-site copper from Cu(II) to Cu(I) by a reducing agent and H(2)O(2) or O(2) as a cosubstrate. Has broad specificity, cleaving at any position along the beta-glucan backbone of xyloglucan, regardless of substitutions. Shows minor activity on glucomannan. In Gloeophyllum trabeum (strain ATCC 11539 / FP-39264 / Madison 617) (Brown rot fungus), this protein is AA9 family lytic polysaccharide monooxygenase A.